Consider the following 428-residue polypeptide: Adenylosuccinate synthetase (428 aa).

Residues 11 to 17 (GDEGKGK) and 39 to 41 (GHT) contribute to the GTP site. Residue aspartate 12 is the Proton acceptor of the active site. The Mg(2+) site is built by aspartate 12 and glycine 39. IMP contacts are provided by residues 12-15 (DEGK), 37-40 (NAGH), threonine 130, arginine 144, asparagine 226, threonine 241, and arginine 305. Histidine 40 functions as the Proton donor in the catalytic mechanism. Substrate is bound at residue 301–307 (VTTGRKR). GTP-binding positions include arginine 307, 333–335 (KLD), and 415–417 (GTG).

This sequence belongs to the adenylosuccinate synthetase family. In terms of assembly, homodimer. Mg(2+) is required as a cofactor.

The protein resides in the cytoplasm. The enzyme catalyses IMP + L-aspartate + GTP = N(6)-(1,2-dicarboxyethyl)-AMP + GDP + phosphate + 2 H(+). Its pathway is purine metabolism; AMP biosynthesis via de novo pathway; AMP from IMP: step 1/2. Its function is as follows. Plays an important role in the de novo pathway and in the salvage pathway of purine nucleotide biosynthesis. Catalyzes the first committed step in the biosynthesis of AMP from IMP. The chain is Adenylosuccinate synthetase from Lodderomyces elongisporus (strain ATCC 11503 / CBS 2605 / JCM 1781 / NBRC 1676 / NRRL YB-4239) (Yeast).